The sequence spans 374 residues: Phosphate-binding protein PstS 1 (374 aa).

Residues 1–23 (MKIRLHTLLAVLTAAPLLLAAAG) form the signal peptide. Cys-24 is lipidated: N-palmitoyl cysteine. Residue Cys-24 is the site of S-diacylglycerol cysteine attachment. A disordered region spans residues 25–48 (GSKPPSGSPETGAGAGTVATTPAS). Phosphate is bound by residues 58 to 60 (STL), Ser-88, Asp-106, and 189 to 191 (SGD).

The protein belongs to the PstS family. As to quaternary structure, the complex is composed of two ATP-binding proteins (PstB), two transmembrane proteins (PstC and PstA) and a solute-binding protein (PstS).

It localises to the cell membrane. In terms of biological role, part of the ABC transporter complex PstSACB involved in phosphate import. The chain is Phosphate-binding protein PstS 1 (pstS1) from Mycobacterium tuberculosis (strain CDC 1551 / Oshkosh).